Consider the following 298-residue polypeptide: Aspartate carbamoyltransferase catalytic subunit (298 aa).

Carbamoyl phosphate is bound by residues R50 and T51. K79 provides a ligand contact to L-aspartate. R100, H128, and Q131 together coordinate carbamoyl phosphate. The L-aspartate site is built by R160 and R221. Residues L260 and P261 each contribute to the carbamoyl phosphate site.

The protein belongs to the aspartate/ornithine carbamoyltransferase superfamily. ATCase family. In terms of assembly, heterooligomer of catalytic and regulatory chains.

The catalysed reaction is carbamoyl phosphate + L-aspartate = N-carbamoyl-L-aspartate + phosphate + H(+). It functions in the pathway pyrimidine metabolism; UMP biosynthesis via de novo pathway; (S)-dihydroorotate from bicarbonate: step 2/3. Catalyzes the condensation of carbamoyl phosphate and aspartate to form carbamoyl aspartate and inorganic phosphate, the committed step in the de novo pyrimidine nucleotide biosynthesis pathway. In Methanoculleus marisnigri (strain ATCC 35101 / DSM 1498 / JR1), this protein is Aspartate carbamoyltransferase catalytic subunit.